We begin with the raw amino-acid sequence, 197 residues long: Large ribosomal subunit protein bL17 (197 aa).

Positions 136-197 (RAAKKADAPQ…DAEKSSDTEK (62 aa)) are disordered. The segment covering 148–187 (VADEATDADESVEDEAPAQDDSADEVEAAADETPADDAEA) has biased composition (acidic residues). Residues 188 to 197 (DAEKSSDTEK) show a composition bias toward basic and acidic residues.

This sequence belongs to the bacterial ribosomal protein bL17 family. As to quaternary structure, part of the 50S ribosomal subunit. Contacts protein L32.

This chain is Large ribosomal subunit protein bL17, found in Beutenbergia cavernae (strain ATCC BAA-8 / DSM 12333 / CCUG 43141 / JCM 11478 / NBRC 16432 / NCIMB 13614 / HKI 0122).